A 152-amino-acid chain; its full sequence is 6,7-dimethyl-8-ribityllumazine synthase (152 aa).

Residues Phe21, 55–57, and 79–81 each bind 5-amino-6-(D-ribitylamino)uracil; these read AFE and CVI. 84 to 85 is a binding site for (2S)-2-hydroxy-3-oxobutyl phosphate; the sequence is AT. His87 (proton donor) is an active-site residue. Residue Phe112 coordinates 5-amino-6-(D-ribitylamino)uracil. Residue Arg126 participates in (2S)-2-hydroxy-3-oxobutyl phosphate binding.

Belongs to the DMRL synthase family. As to quaternary structure, forms an icosahedral capsid composed of 60 subunits, arranged as a dodecamer of pentamers.

The catalysed reaction is (2S)-2-hydroxy-3-oxobutyl phosphate + 5-amino-6-(D-ribitylamino)uracil = 6,7-dimethyl-8-(1-D-ribityl)lumazine + phosphate + 2 H2O + H(+). It functions in the pathway cofactor biosynthesis; riboflavin biosynthesis; riboflavin from 2-hydroxy-3-oxobutyl phosphate and 5-amino-6-(D-ribitylamino)uracil: step 1/2. In terms of biological role, catalyzes the formation of 6,7-dimethyl-8-ribityllumazine by condensation of 5-amino-6-(D-ribitylamino)uracil with 3,4-dihydroxy-2-butanone 4-phosphate. This is the penultimate step in the biosynthesis of riboflavin. In Staphylococcus haemolyticus (strain JCSC1435), this protein is 6,7-dimethyl-8-ribityllumazine synthase.